The sequence spans 150 residues: Ribosomal RNA large subunit methyltransferase H (150 aa).

S-adenosyl-L-methionine is bound by residues Ala100 and Leu118–Phe123.

This sequence belongs to the RNA methyltransferase RlmH family. As to quaternary structure, homodimer.

It localises to the cytoplasm. The catalysed reaction is pseudouridine(1915) in 23S rRNA + S-adenosyl-L-methionine = N(3)-methylpseudouridine(1915) in 23S rRNA + S-adenosyl-L-homocysteine + H(+). Functionally, specifically methylates the pseudouridine at position 1915 (m3Psi1915) in 23S rRNA. This chain is Ribosomal RNA large subunit methyltransferase H, found in Helicobacter pylori (strain J99 / ATCC 700824) (Campylobacter pylori J99).